The primary structure comprises 317 residues: tRNA(Ile)-lysidine synthase (317 aa).

32–37 (SGGVDS) is a binding site for ATP.

It belongs to the tRNA(Ile)-lysidine synthase family.

Its subcellular location is the cytoplasm. The catalysed reaction is cytidine(34) in tRNA(Ile2) + L-lysine + ATP = lysidine(34) in tRNA(Ile2) + AMP + diphosphate + H(+). Functionally, ligates lysine onto the cytidine present at position 34 of the AUA codon-specific tRNA(Ile) that contains the anticodon CAU, in an ATP-dependent manner. Cytidine is converted to lysidine, thus changing the amino acid specificity of the tRNA from methionine to isoleucine. The sequence is that of tRNA(Ile)-lysidine synthase from Aquifex aeolicus (strain VF5).